The primary structure comprises 876 residues: Alanine--tRNA ligase (876 aa).

K74 bears the N6-acetyllysine mark. Zn(2+)-binding residues include H564, H568, C666, and H670.

The protein belongs to the class-II aminoacyl-tRNA synthetase family. Homotetramer. Zn(2+) serves as cofactor.

It is found in the cytoplasm. It catalyses the reaction tRNA(Ala) + L-alanine + ATP = L-alanyl-tRNA(Ala) + AMP + diphosphate. Its function is as follows. Catalyzes the attachment of alanine to tRNA(Ala) in a two-step reaction: alanine is first activated by ATP to form Ala-AMP and then transferred to the acceptor end of tRNA(Ala). Also edits incorrectly charged Ser-tRNA(Ala) and Gly-tRNA(Ala) via its editing domain. The protein is Alanine--tRNA ligase of Shigella dysenteriae serotype 1 (strain Sd197).